A 176-amino-acid chain; its full sequence is Methylmalonyl-CoA epimerase, mitochondrial (176 aa).

The transit peptide at 1-36 (MARVLKAAAANAVGLFSRLQAPIPTVRASSTSQPLD) directs the protein to the mitochondrion. The VOC domain occupies 47–176 (RLNHVAIAVP…GGVLVELEQA (130 aa)). Residue H50 coordinates Co(2+). K114 bears the N6-succinyllysine mark. Residue H122 coordinates Co(2+). K150 carries the post-translational modification N6-acetyllysine; alternate. K150 carries the N6-succinyllysine; alternate modification. E172 lines the Co(2+) pocket.

Belongs to the methylmalonyl-CoA epimerase family.

The protein localises to the mitochondrion. The enzyme catalyses (R)-methylmalonyl-CoA = (S)-methylmalonyl-CoA. In terms of biological role, methylmalonyl-CoA epimerase involved in propionyl-CoA metabolism. This is Methylmalonyl-CoA epimerase, mitochondrial from Homo sapiens (Human).